A 209-amino-acid polypeptide reads, in one-letter code: MADS-box transcription factor 2 (209 aa).

Residues methionine 1–lysine 61 enclose the MADS-box domain. The region spanning histidine 84–alanine 170 is the K-box domain.

In terms of tissue distribution, highly expressed in anthers and carpels. Expressed in pollen, tapetum and stigma.

It localises to the nucleus. Its function is as follows. Probable transcription factor involved in the development of floral organs. B-class protein required for normal development of lodicules (whorl 2). The sequence is that of MADS-box transcription factor 2 (MADS2) from Oryza sativa subsp. japonica (Rice).